Here is a 613-residue protein sequence, read N- to C-terminus: Pentatricopeptide repeat-containing protein At2g45350, chloroplastic (613 aa).

13 PPR repeats span residues 85-119 (DPFL…GVSV), 120-154 (DKFS…GLWS), 155-185 (DLFL…MPKR), 186-216 (DSVS…MPME), 219-250 (NLIS…MPEK), 251-285 (DLIS…DVVT), 286-312 (WATM…MPHR), 313-347 (DVVA…SHLL), 349-383 (DDTT…QFYL), 384-414 (GGKL…IENK), 415-449 (SIDH…SLKP), 450-480 (DDIT…MRRK), and 486-516 (RLQH…MPVE). Residues 521–596 (IWRTFLTACS…IPGCSWIELD (76 aa)) are type E motif.

This sequence belongs to the PPR family. PCMP-E subfamily. In terms of assembly, interacts with DYW1.

It localises to the plastid. The protein resides in the chloroplast. Its function is as follows. Plays a major role in chloroplast RNA editing. Acts as a site-recognition transacting factor to recruit C-deaminase. Involved in single RNA editing events. Required for the edition of the site 1 of ndhD (ndhD-1 site corresponding to cytidine-2), which is a plastid-encoded subunit of the NADH-plastoquinone oxidoreductase. The interaction with DYW1 is required for its function in editing the ndhD-1 site. The protein is Pentatricopeptide repeat-containing protein At2g45350, chloroplastic (CRR4) of Arabidopsis thaliana (Mouse-ear cress).